We begin with the raw amino-acid sequence, 29 residues long: KYCYNDDDCKSECMVVKYCQQGTCYCKGN.

Contains 3 disulfide bonds. In terms of tissue distribution, expressed by the venom gland.

The protein resides in the secreted. In terms of biological role, may act as a toxin. The protein is Orphan peptide CllNtx of Centruroides limpidus (Mexican scorpion).